The chain runs to 236 residues: 1-(5-phosphoribosyl)-5-[(5-phosphoribosylamino)methylideneamino] imidazole-4-carboxamide isomerase (236 aa).

The active-site Proton acceptor is Asp-8. The Proton donor role is filled by Asp-127.

Belongs to the HisA/HisF family.

Its subcellular location is the cytoplasm. The enzyme catalyses 1-(5-phospho-beta-D-ribosyl)-5-[(5-phospho-beta-D-ribosylamino)methylideneamino]imidazole-4-carboxamide = 5-[(5-phospho-1-deoxy-D-ribulos-1-ylimino)methylamino]-1-(5-phospho-beta-D-ribosyl)imidazole-4-carboxamide. The protein operates within amino-acid biosynthesis; L-histidine biosynthesis; L-histidine from 5-phospho-alpha-D-ribose 1-diphosphate: step 4/9. This chain is 1-(5-phosphoribosyl)-5-[(5-phosphoribosylamino)methylideneamino] imidazole-4-carboxamide isomerase, found in Campylobacter hominis (strain ATCC BAA-381 / DSM 21671 / CCUG 45161 / LMG 19568 / NCTC 13146 / CH001A).